Consider the following 624-residue polypeptide: Double-stranded RNA-binding protein Staufen homolog 2 (624 aa).

5 DRBM domains span residues 55–122 (STSI…NGLA), 142–228 (QRAN…SEIS), 254–321 (MKSF…PEYG), 354–422 (RRRE…IADQ), and 540–604 (LTCL…EKAD). The interval 197–223 (LRNEPIPERSSLNGEANRGPEEDKDAN) is disordered. The span at 214–223 (RGPEEDKDAN) shows a compositional bias: basic and acidic residues. Disordered stretches follow at residues 401-428 (EKTG…TPKG) and 592-624 (PFEQ…KAVV). Residues 415–426 (QNSGIADQTSTP) show a composition bias toward polar residues. The span at 596 to 605 (AKLRGEKADN) shows a compositional bias: basic and acidic residues.

Functionally, RNA-binding protein required for the microtubule-dependent transport of RNAs within polarized cell types. The chain is Double-stranded RNA-binding protein Staufen homolog 2 (stau2) from Xenopus tropicalis (Western clawed frog).